Here is a 505-residue protein sequence, read N- to C-terminus: UDP-N-acetylmuramate--L-alanine ligase (505 aa).

Gly164–Thr170 is a binding site for ATP.

The protein belongs to the MurCDEF family.

It localises to the cytoplasm. The catalysed reaction is UDP-N-acetyl-alpha-D-muramate + L-alanine + ATP = UDP-N-acetyl-alpha-D-muramoyl-L-alanine + ADP + phosphate + H(+). Its pathway is cell wall biogenesis; peptidoglycan biosynthesis. Functionally, cell wall formation. The polypeptide is UDP-N-acetylmuramate--L-alanine ligase (Synechocystis sp. (strain ATCC 27184 / PCC 6803 / Kazusa)).